Here is a 487-residue protein sequence, read N- to C-terminus: UDP-N-acetylmuramate--L-alanine ligase (487 aa).

126 to 132 (GTHGKTT) provides a ligand contact to ATP.

Belongs to the MurCDEF family.

It is found in the cytoplasm. It catalyses the reaction UDP-N-acetyl-alpha-D-muramate + L-alanine + ATP = UDP-N-acetyl-alpha-D-muramoyl-L-alanine + ADP + phosphate + H(+). Its pathway is cell wall biogenesis; peptidoglycan biosynthesis. Functionally, cell wall formation. This chain is UDP-N-acetylmuramate--L-alanine ligase, found in Psychromonas ingrahamii (strain DSM 17664 / CCUG 51855 / 37).